A 328-amino-acid polypeptide reads, in one-letter code: 4-hydroxythreonine-4-phosphate dehydrogenase (328 aa).

Substrate-binding residues include His134 and Thr135. A divalent metal cation-binding residues include His164, His209, and His265. The substrate site is built by Lys273, Asn282, and Arg291.

The protein belongs to the PdxA family. As to quaternary structure, homodimer. It depends on Zn(2+) as a cofactor. Mg(2+) is required as a cofactor. The cofactor is Co(2+).

Its subcellular location is the cytoplasm. It catalyses the reaction 4-(phosphooxy)-L-threonine + NAD(+) = 3-amino-2-oxopropyl phosphate + CO2 + NADH. It participates in cofactor biosynthesis; pyridoxine 5'-phosphate biosynthesis; pyridoxine 5'-phosphate from D-erythrose 4-phosphate: step 4/5. Its function is as follows. Catalyzes the NAD(P)-dependent oxidation of 4-(phosphooxy)-L-threonine (HTP) into 2-amino-3-oxo-4-(phosphooxy)butyric acid which spontaneously decarboxylates to form 3-amino-2-oxopropyl phosphate (AHAP). The protein is 4-hydroxythreonine-4-phosphate dehydrogenase of Vibrio vulnificus (strain CMCP6).